The sequence spans 464 residues: tRNA-2-methylthio-N(6)-dimethylallyladenosine synthase (464 aa).

Residues 19 to 135 enclose the MTTase N-terminal domain; the sequence is GSYWITTFGC…LENLLERVDS (117 aa). Residues Cys28, Cys64, Cys98, Cys170, Cys174, and Cys177 each contribute to the [4Fe-4S] cluster site. One can recognise a Radical SAM core domain in the interval 156–393; that stretch reads RDSTICGWVN…NELVEATSRK (238 aa). One can recognise a TRAM domain in the interval 396–464; it reads QRYLNNTESV…SFSLSGQIYK (69 aa).

Belongs to the methylthiotransferase family. MiaB subfamily. Monomer. [4Fe-4S] cluster serves as cofactor.

The protein localises to the cytoplasm. The enzyme catalyses N(6)-dimethylallyladenosine(37) in tRNA + (sulfur carrier)-SH + AH2 + 2 S-adenosyl-L-methionine = 2-methylsulfanyl-N(6)-dimethylallyladenosine(37) in tRNA + (sulfur carrier)-H + 5'-deoxyadenosine + L-methionine + A + S-adenosyl-L-homocysteine + 2 H(+). Catalyzes the methylthiolation of N6-(dimethylallyl)adenosine (i(6)A), leading to the formation of 2-methylthio-N6-(dimethylallyl)adenosine (ms(2)i(6)A) at position 37 in tRNAs that read codons beginning with uridine. The chain is tRNA-2-methylthio-N(6)-dimethylallyladenosine synthase from Prochlorococcus marinus (strain MIT 9515).